We begin with the raw amino-acid sequence, 353 residues long: N-acetyl-gamma-glutamyl-phosphate reductase (353 aa).

Residue cysteine 157 is part of the active site.

The protein belongs to the NAGSA dehydrogenase family. Type 1 subfamily.

It localises to the cytoplasm. It catalyses the reaction N-acetyl-L-glutamate 5-semialdehyde + phosphate + NADP(+) = N-acetyl-L-glutamyl 5-phosphate + NADPH + H(+). Its pathway is amino-acid biosynthesis; L-arginine biosynthesis; N(2)-acetyl-L-ornithine from L-glutamate: step 3/4. Functionally, catalyzes the NADPH-dependent reduction of N-acetyl-5-glutamyl phosphate to yield N-acetyl-L-glutamate 5-semialdehyde. The sequence is that of N-acetyl-gamma-glutamyl-phosphate reductase from Bordetella avium (strain 197N).